A 184-amino-acid polypeptide reads, in one-letter code: Protein Syd (184 aa).

This sequence belongs to the Syd family.

The protein resides in the cell inner membrane. In terms of biological role, interacts with the SecY protein in vivo. May bind preferentially to an uncomplexed state of SecY, thus functioning either as a chelating agent for excess SecY in the cell or as a regulatory factor that negatively controls the translocase function. This is Protein Syd from Photobacterium profundum (strain SS9).